The chain runs to 219 residues: Cytochrome b6 (219 aa).

Residues 32 to 52 (IFYCFGGIVLTAFIFQGASGF) form a helical membrane-spanning segment. Position 35 (Cys-35) interacts with heme c. Heme b-binding residues include His-86 and His-100. The next 3 helical transmembrane spans lie at 90-110 (SGCM…TGGF), 116-136 (LTWI…VTGY), and 190-210 (IHTF…FSLL). Heme b is bound by residues His-191 and His-206.

The protein belongs to the cytochrome b family. PetB subfamily. The 4 large subunits of the cytochrome b6-f complex are cytochrome b6, subunit IV (17 kDa polypeptide, PetD), cytochrome f and the Rieske protein, while the 4 small subunits are PetG, PetL, PetM and PetN. The complex functions as a dimer. It depends on heme b as a cofactor. The cofactor is heme c.

The protein resides in the plastid. It localises to the chloroplast thylakoid membrane. Component of the cytochrome b6-f complex, which mediates electron transfer between photosystem II (PSII) and photosystem I (PSI), cyclic electron flow around PSI, and state transitions. This chain is Cytochrome b6, found in Heterocapsa triquetra (Dinoflagellate).